The following is a 67-amino-acid chain: Metallothionein-A (67 aa).

It belongs to the metallothionein superfamily. Type 4 family.

Functionally, metallothioneins have a high content of cysteine residues that bind various heavy metals. The sequence is that of Metallothionein-A from Sphaerechinus granularis (Purple sea urchin).